The chain runs to 172 residues: 3-hydroxydecanoyl-[acyl-carrier-protein] dehydratase (172 aa).

His71 is a catalytic residue.

Belongs to the thioester dehydratase family. FabA subfamily. As to quaternary structure, homodimer.

The protein localises to the cytoplasm. The enzyme catalyses a (3R)-hydroxyacyl-[ACP] = a (2E)-enoyl-[ACP] + H2O. It catalyses the reaction (3R)-hydroxydecanoyl-[ACP] = (2E)-decenoyl-[ACP] + H2O. It carries out the reaction (2E)-decenoyl-[ACP] = (3Z)-decenoyl-[ACP]. It functions in the pathway lipid metabolism; fatty acid biosynthesis. In terms of biological role, necessary for the introduction of cis unsaturation into fatty acids. Catalyzes the dehydration of (3R)-3-hydroxydecanoyl-ACP to E-(2)-decenoyl-ACP and then its isomerization to Z-(3)-decenoyl-ACP. Can catalyze the dehydratase reaction for beta-hydroxyacyl-ACPs with saturated chain lengths up to 16:0, being most active on intermediate chain length. The sequence is that of 3-hydroxydecanoyl-[acyl-carrier-protein] dehydratase from Edwardsiella ictaluri (strain 93-146).